Here is a 118-residue protein sequence, read N- to C-terminus: Holo-[acyl-carrier-protein] synthase (118 aa).

Positions 9 and 52 each coordinate Mg(2+).

This sequence belongs to the P-Pant transferase superfamily. AcpS family. The cofactor is Mg(2+).

The protein localises to the cytoplasm. The catalysed reaction is apo-[ACP] + CoA = holo-[ACP] + adenosine 3',5'-bisphosphate + H(+). Its function is as follows. Transfers the 4'-phosphopantetheine moiety from coenzyme A to a Ser of acyl-carrier-protein. In Frankia alni (strain DSM 45986 / CECT 9034 / ACN14a), this protein is Holo-[acyl-carrier-protein] synthase.